Here is a 281-residue protein sequence, read N- to C-terminus: Phosphate import ATP-binding protein PstB 1 (281 aa).

Positions 1–34 (MTENTAETADESSDGGVTATTGAATTTPTTPPEP) are disordered. A compositionally biased stretch (low complexity) spans 15–28 (GGVTATTGAATTTP). The region spanning 36 to 276 (IRARDLDVFY…PEHQRVEEYI (241 aa)) is the ABC transporter domain. 68–75 (GPSGCGKS) contributes to the ATP binding site.

This sequence belongs to the ABC transporter superfamily. Phosphate importer (TC 3.A.1.7) family. As to quaternary structure, the complex is composed of two ATP-binding proteins (PstB), two transmembrane proteins (PstC and PstA) and a solute-binding protein (PstS).

The protein resides in the cell membrane. The catalysed reaction is phosphate(out) + ATP + H2O = ADP + 2 phosphate(in) + H(+). Functionally, part of the ABC transporter complex PstSACB involved in phosphate import. Responsible for energy coupling to the transport system. In Halobacterium salinarum (strain ATCC 700922 / JCM 11081 / NRC-1) (Halobacterium halobium), this protein is Phosphate import ATP-binding protein PstB 1.